An 869-amino-acid polypeptide reads, in one-letter code: Protein translocase subunit SecA (869 aa).

ATP-binding positions include Gln88, 106-110, and Asp509; that span reads GEGKT. The span at 818 to 840 shows a compositional bias: basic and acidic residues; the sequence is QDEGLKFNQREGEDAPAVREKKI. A disordered region spans residues 818 to 869; the sequence is QDEGLKFNQREGEDAPAVREKKIPRNSPCPCGSGKKYKDCCGKSGPKKGILA. 4 residues coordinate Zn(2+): Cys846, Cys848, Cys857, and Cys858.

The protein belongs to the SecA family. In terms of assembly, monomer and homodimer. Part of the essential Sec protein translocation apparatus which comprises SecA, SecYEG and auxiliary proteins SecDF-YajC and YidC. The cofactor is Zn(2+).

It localises to the cell inner membrane. Its subcellular location is the cytoplasm. The catalysed reaction is ATP + H2O + cellular proteinSide 1 = ADP + phosphate + cellular proteinSide 2.. In terms of biological role, part of the Sec protein translocase complex. Interacts with the SecYEG preprotein conducting channel. Has a central role in coupling the hydrolysis of ATP to the transfer of proteins into and across the cell membrane, serving as an ATP-driven molecular motor driving the stepwise translocation of polypeptide chains across the membrane. In Campylobacter curvus (strain 525.92), this protein is Protein translocase subunit SecA.